The chain runs to 147 residues: uncharacterized protein (147 aa).

Residues 3–23 traverse the membrane as a helical segment; the sequence is APMVGMVVLVVTLGAAVLALS.

To M.tuberculosis Rv1312.

The protein resides in the membrane. This is an uncharacterized protein from Mycobacterium leprae (strain TN).